A 226-amino-acid chain; its full sequence is Enolase-phosphatase E1 (226 aa).

The protein belongs to the HAD-like hydrolase superfamily. MasA/MtnC family. Monomer. The cofactor is Mg(2+).

It carries out the reaction 5-methylsulfanyl-2,3-dioxopentyl phosphate + H2O = 1,2-dihydroxy-5-(methylsulfanyl)pent-1-en-3-one + phosphate. The protein operates within amino-acid biosynthesis; L-methionine biosynthesis via salvage pathway; L-methionine from S-methyl-5-thio-alpha-D-ribose 1-phosphate: step 3/6. Its pathway is amino-acid biosynthesis; L-methionine biosynthesis via salvage pathway; L-methionine from S-methyl-5-thio-alpha-D-ribose 1-phosphate: step 4/6. Its function is as follows. Bifunctional enzyme that catalyzes the enolization of 2,3-diketo-5-methylthiopentyl-1-phosphate (DK-MTP-1-P) into the intermediate 2-hydroxy-3-keto-5-methylthiopentenyl-1-phosphate (HK-MTPenyl-1-P), which is then dephosphorylated to form the acireductone 1,2-dihydroxy-3-keto-5-methylthiopentene (DHK-MTPene). This Shewanella amazonensis (strain ATCC BAA-1098 / SB2B) protein is Enolase-phosphatase E1.